The primary structure comprises 73 residues: Putative defensin-like protein 42 (73 aa).

4 cysteine pairs are disulfide-bonded: C6/C58, C18/C41, C27/C50, and C31/C52.

The protein belongs to the DEFL family.

This Arabidopsis thaliana (Mouse-ear cress) protein is Putative defensin-like protein 42.